The sequence spans 800 residues: Phenylalanine--tRNA ligase beta subunit (800 aa).

One can recognise a tRNA-binding domain in the interval 39-154 (TKDIKNLVVG…ESQVPGTDAL (116 aa)). In terms of domain architecture, B5 spans 408 to 483 (AFITPIDITA…RIYGYDDIPS (76 aa)). Residues Asp-461, Asp-467, Glu-470, and Glu-471 each contribute to the Mg(2+) site. Residues 708–800 (PIFPGMSRDI…ALIEQGAVIR (93 aa)) form the FDX-ACB domain.

The protein belongs to the phenylalanyl-tRNA synthetase beta subunit family. Type 1 subfamily. Tetramer of two alpha and two beta subunits. It depends on Mg(2+) as a cofactor.

It is found in the cytoplasm. It carries out the reaction tRNA(Phe) + L-phenylalanine + ATP = L-phenylalanyl-tRNA(Phe) + AMP + diphosphate + H(+). The polypeptide is Phenylalanine--tRNA ligase beta subunit (Staphylococcus aureus (strain bovine RF122 / ET3-1)).